The sequence spans 274 residues: MAD2L1-binding protein (274 aa).

An interaction with MAD2L1 region spans residues alanine 45 to lysine 78. Position 102 is a phosphoserine (serine 102).

Belongs to the MAD2L1BP family. As to quaternary structure, interacts with MAD2L1.

It localises to the nucleus. The protein resides in the cytoplasm. It is found in the cytoskeleton. The protein localises to the spindle. In terms of biological role, may function to silence the spindle checkpoint and allow mitosis to proceed through anaphase by binding MAD2L1 after it has become dissociated from the MAD2L1-CDC20 complex. The chain is MAD2L1-binding protein (MAD2L1BP) from Homo sapiens (Human).